A 336-amino-acid chain; its full sequence is Ribosomal RNA large subunit methyltransferase F (336 aa).

This sequence belongs to the methyltransferase superfamily. METTL16/RlmF family.

It localises to the cytoplasm. The enzyme catalyses adenosine(1618) in 23S rRNA + S-adenosyl-L-methionine = N(6)-methyladenosine(1618) in 23S rRNA + S-adenosyl-L-homocysteine + H(+). Functionally, specifically methylates the adenine in position 1618 of 23S rRNA. The protein is Ribosomal RNA large subunit methyltransferase F of Yersinia pestis bv. Antiqua (strain Nepal516).